Consider the following 365-residue polypeptide: NADH-quinone oxidoreductase subunit D (365 aa).

It belongs to the complex I 49 kDa subunit family. NDH-1 is composed of 14 different subunits. Subunits NuoB, C, D, E, F, and G constitute the peripheral sector of the complex.

The protein resides in the cell membrane. The enzyme catalyses a quinone + NADH + 5 H(+)(in) = a quinol + NAD(+) + 4 H(+)(out). Functionally, NDH-1 shuttles electrons from NADH, via FMN and iron-sulfur (Fe-S) centers, to quinones in the respiratory chain. The immediate electron acceptor for the enzyme in this species is believed to be a menaquinone. Couples the redox reaction to proton translocation (for every two electrons transferred, four hydrogen ions are translocated across the cytoplasmic membrane), and thus conserves the redox energy in a proton gradient. This chain is NADH-quinone oxidoreductase subunit D, found in Carboxydothermus hydrogenoformans (strain ATCC BAA-161 / DSM 6008 / Z-2901).